Here is an 849-residue protein sequence, read N- to C-terminus: DNA mismatch repair protein MutS (849 aa).

Residue 602 to 609 (GPNMSGKS) coordinates ATP.

The protein belongs to the DNA mismatch repair MutS family.

Its function is as follows. This protein is involved in the repair of mismatches in DNA. It is possible that it carries out the mismatch recognition step. This protein has a weak ATPase activity. This is DNA mismatch repair protein MutS from Streptococcus sanguinis (strain SK36).